The following is a 585-amino-acid chain: Probable G-protein coupled receptor Mth-like 10 (585 aa).

An N-terminal signal peptide occupies residues 1–32; that stretch reads MPKKIHQPGGSLYCGVTLLGVLCLVVFRLIPG. Over 33-250 the chain is Extracellular; the sequence is IPFGTYVMAE…DHSTVKIINS (218 aa). Disulfide bonds link Cys-56-Cys-110, Cys-112-Cys-117, Cys-121-Cys-216, Cys-122-Cys-135, and Cys-177-Cys-236. Residues Asn-63 and Asn-72 are each glycosylated (N-linked (GlcNAc...) asparagine). N-linked (GlcNAc...) asparagine glycosylation is found at Asn-142, Asn-152, Asn-157, Asn-198, and Asn-223. A helical transmembrane segment spans residues 251–271; sequence YAMMFSIPFMMLTIAVYLLIP. Residues 272–280 lie on the Cytoplasmic side of the membrane; it reads ELRNQHGKS. A helical transmembrane segment spans residues 281–301; sequence LVCYLIGLSVGYSSLCYVQLY. Residues 302–312 lie on the Extracellular side of the membrane; it reads QVDATGVTCKV. Residues 313–333 form a helical membrane-spanning segment; the sequence is FGYTAYFFFMGAYMWLSVISF. Residues 334 to 353 are Cytoplasmic-facing; sequence DLWHNFRGTRGINRFQEKKR. The chain crosses the membrane as a helical span at residues 354–374; it reads FLFYSLYSWGIALVFLAFTYC. The Extracellular portion of the chain corresponds to 375-404; that stretch reads AQQLTNLPANLKPGIGDGVYCWLDMSNWAA. Residues 405–425 form a helical membrane-spanning segment; the sequence is MIYFYGPILAIVVANTIMFIM. Topologically, residues 426–466 are cytoplasmic; sequence TAIKIHGVQREMARIIASENSTKNLRTEKDKRFYRAWSNYR. The helical transmembrane segment at 467-487 threads the bilayer; sequence FGLFLRLFLIMGITWLTELIS. Residues 488–498 lie on the Extracellular side of the membrane; it reads YFVGSDKGWSK. The chain crosses the membrane as a helical span at residues 499-519; that stretch reads LFYISDLANAMQGFLIFMLFV. Over 520 to 585 the chain is Cytoplasmic; that stretch reads MKKKVKHLIT…VDPQKTTIFR (66 aa).

It belongs to the G-protein coupled receptor 2 family. Mth subfamily.

It localises to the cell membrane. In Drosophila melanogaster (Fruit fly), this protein is Probable G-protein coupled receptor Mth-like 10 (mthl10).